The following is a 273-amino-acid chain: Homeobox protein Nkx-2.2 (273 aa).

Disordered stretches follow at residues 1-56 (MSLT…LDAV) and 90-131 (LAAG…KRKR). Acidic residues predominate over residues 20–38 (DTNDEEGSVAEGPEEENEG). A DNA-binding region (homeobox) is located at residues 128–187 (KRKRRVLFSKAQTYELERRFRQQRYLSAPEREHLASLIRLTPTQVKIWFQNHRYKMKRAR).

Belongs to the NK-2 homeobox family. Interacts with OLIG2.

Its subcellular location is the nucleus. Functionally, transcriptional activator involved in the development of insulin-producting beta cells in the endocrine pancreas. May also be involved in specifying diencephalic neuromeric boundaries, and in controlling the expression of genes that play a role in axonal guidance. Binds to elements within the NEUROD1 promoter. This chain is Homeobox protein Nkx-2.2 (NKX2-2), found in Homo sapiens (Human).